The primary structure comprises 428 residues: Serine--tRNA ligase (428 aa).

235–237 (TAE) provides a ligand contact to L-serine. An ATP-binding site is contributed by 266–268 (RSE). Glu-289 contributes to the L-serine binding site. An ATP-binding site is contributed by 353-356 (EISS). Ser-389 provides a ligand contact to L-serine.

It belongs to the class-II aminoacyl-tRNA synthetase family. Type-1 seryl-tRNA synthetase subfamily. Homodimer. The tRNA molecule binds across the dimer.

It localises to the cytoplasm. The enzyme catalyses tRNA(Ser) + L-serine + ATP = L-seryl-tRNA(Ser) + AMP + diphosphate + H(+). The catalysed reaction is tRNA(Sec) + L-serine + ATP = L-seryl-tRNA(Sec) + AMP + diphosphate + H(+). The protein operates within aminoacyl-tRNA biosynthesis; selenocysteinyl-tRNA(Sec) biosynthesis; L-seryl-tRNA(Sec) from L-serine and tRNA(Sec): step 1/1. Its function is as follows. Catalyzes the attachment of serine to tRNA(Ser). Is also able to aminoacylate tRNA(Sec) with serine, to form the misacylated tRNA L-seryl-tRNA(Sec), which will be further converted into selenocysteinyl-tRNA(Sec). This is Serine--tRNA ligase from Shewanella pealeana (strain ATCC 700345 / ANG-SQ1).